Consider the following 102-residue polypeptide: Small ribosomal subunit protein uS10 (102 aa).

Belongs to the universal ribosomal protein uS10 family. In terms of assembly, part of the 30S ribosomal subunit.

In terms of biological role, involved in the binding of tRNA to the ribosomes. This Rhizobium meliloti (strain 1021) (Ensifer meliloti) protein is Small ribosomal subunit protein uS10.